We begin with the raw amino-acid sequence, 199 residues long: MSNIVWHDHKVTRAERSANKNQKPCLLWFTGLSGSGKSTIANALDVALHERGYHTFLLDGDNVRHGLCSDLGFSDDDRVENIRRVGEVCKLFADAGLIVMSAFISPFTSDRRMVRKLFPAGEFIEVFMDAPLETCESRDPKGLYKKARAGEIKHFTGIDSPYEVPSHPEIRLDTSQSTVDECVDSLIAYLQERELIKSN.

Residue 31-38 coordinates ATP; the sequence is GLSGSGKS. Ser-105 (phosphoserine intermediate) is an active-site residue.

Belongs to the APS kinase family.

It carries out the reaction adenosine 5'-phosphosulfate + ATP = 3'-phosphoadenylyl sulfate + ADP + H(+). It functions in the pathway sulfur metabolism; hydrogen sulfide biosynthesis; sulfite from sulfate: step 2/3. Functionally, catalyzes the synthesis of activated sulfate. The protein is Adenylyl-sulfate kinase of Marinobacter nauticus (strain ATCC 700491 / DSM 11845 / VT8) (Marinobacter aquaeolei).